Here is a 160-residue protein sequence, read N- to C-terminus: 3-dehydroquinate dehydratase (160 aa).

The active-site Proton acceptor is the Y22. Positions 73, 79, and 86 each coordinate substrate. H99 serves as the catalytic Proton donor. Substrate-binding positions include 100 to 101 and R110; that span reads IS.

Belongs to the type-II 3-dehydroquinase family. Homododecamer.

The catalysed reaction is 3-dehydroquinate = 3-dehydroshikimate + H2O. The protein operates within metabolic intermediate biosynthesis; chorismate biosynthesis; chorismate from D-erythrose 4-phosphate and phosphoenolpyruvate: step 3/7. In terms of biological role, catalyzes a trans-dehydration via an enolate intermediate. The polypeptide is 3-dehydroquinate dehydratase (Sulfurimonas denitrificans (strain ATCC 33889 / DSM 1251) (Thiomicrospira denitrificans (strain ATCC 33889 / DSM 1251))).